Here is a 349-residue protein sequence, read N- to C-terminus: Green-sensitive opsin-2 (349 aa).

Over 1–36 the chain is Extracellular; sequence MNGTEGNNFYVPLSNRTGLVRSPFEYPQYYLAEPWQ. Asparagine 2 and asparagine 15 each carry an N-linked (GlcNAc...) asparagine glycan. A helical membrane pass occupies residues 37–61; the sequence is FKLLAVYMFFLICLGLPINGLTLIC. Residues 62–73 lie on the Cytoplasmic side of the membrane; sequence TAQHKKLRQPLN. The helical transmembrane segment at 74–99 threads the bilayer; sequence FILVNLAVAGAIMVCFGFTVTFYTAI. At 100-113 the chain is on the extracellular side; sequence NGYFALGPTGCAVE. A disulfide bridge links cysteine 110 with cysteine 187. A helical membrane pass occupies residues 114-133; sequence GFMATLGGEVALWSLVVLAI. Over 134–152 the chain is Cytoplasmic; sequence ERYIVVCKPMGSFKFSSTH. Residues 153 to 176 form a helical membrane-spanning segment; the sequence is ASAGIAFTWVMAMACAAPPLVGWS. Over 177 to 202 the chain is Extracellular; it reads RYIPEGIQCSCGPDYYTLNPEYNNES. The chain crosses the membrane as a helical span at residues 203-230; the sequence is YVLYMFICHFILPVTIIFFTYGRLVCTV. Topologically, residues 231-252 are cytoplasmic; the sequence is KAAAAQQQDSASTQKAEREVTK. Residues 253–276 form a helical membrane-spanning segment; that stretch reads MVILMVLGFLVAWTPYATVAAWIF. The Extracellular portion of the chain corresponds to 277–284; the sequence is FNKGAAFS. A helical transmembrane segment spans residues 285–309; sequence AQFMAIPAFFSKTSALYNPVIYVLL. Residue lysine 296 is modified to N6-(retinylidene)lysine. Over 310–349 the chain is Cytoplasmic; the sequence is NKQFRSCMLTTLFCGKNPLGDEESSTVSTSKTEVSSVSPA. The interval 329–349 is disordered; the sequence is GDEESSTVSTSKTEVSSVSPA. A compositionally biased stretch (low complexity) spans 334–349; it reads STVSTSKTEVSSVSPA.

Belongs to the G-protein coupled receptor 1 family. Opsin subfamily. Post-translationally, phosphorylated on some or all of the serine and threonine residues present in the C-terminal region. As to expression, the color pigments are found in the cone photoreceptor cells.

The protein resides in the membrane. Its function is as follows. Visual pigments are the light-absorbing molecules that mediate vision. They consist of an apoprotein, opsin, covalently linked to cis-retinal. The sequence is that of Green-sensitive opsin-2 from Carassius auratus (Goldfish).